The sequence spans 87 residues: Small ribosomal subunit protein bS20 (87 aa).

Belongs to the bacterial ribosomal protein bS20 family.

Binds directly to 16S ribosomal RNA. This chain is Small ribosomal subunit protein bS20, found in Beijerinckia indica subsp. indica (strain ATCC 9039 / DSM 1715 / NCIMB 8712).